The following is a 297-amino-acid chain: Taste receptor type 2 member 4 (297 aa).

The Extracellular segment spans residues Met1–Ala11. The helical transmembrane segment at Ala12 to Ile32 threads the bilayer. Topologically, residues Lys33–Arg46 are cytoplasmic. The helical transmembrane segment at Ile47–Val67 threads the bilayer. Topologically, residues Tyr68–Ser80 are extracellular. A helical transmembrane segment spans residues Thr81–Leu101. Residues Asn102–Thr128 are Cytoplasmic-facing. A helical transmembrane segment spans residues Thr129–Leu149. At Ser150–Asp171 the chain is on the extracellular side. Asn163 is a glycosylation site (N-linked (GlcNAc...) asparagine). Residues Gly172–Val192 traverse the membrane as a helical segment. The Cytoplasmic segment spans residues Thr193–Arg229. A helical transmembrane segment spans residues Leu230–Pro250. Topologically, residues Ser251–Gln260 are extracellular. The helical transmembrane segment at Ala261–Thr281 threads the bilayer. Over His282–Lys297 the chain is Cytoplasmic.

Belongs to the G-protein coupled receptor T2R family. As to expression, expressed in subsets of taste receptor cells of the tongue and palate epithelium and exclusively in gustducin-positive cells. Expressed in 15% taste bud cells in circumvallate and foliate papillae but only in 2% in fungiform papillae.

It localises to the membrane. It is found in the cell projection. The protein localises to the cilium membrane. Gustducin-coupled receptor for denatonium and N(6)-propyl-2-thiouracil implicated in the perception of bitter compounds in the oral cavity and the gastrointestinal tract. Signals through PLCB2 and the calcium-regulated cation channel TRPM5. In airway epithelial cells, binding of denatonium increases the intracellular calcium ion concentration and stimulates ciliary beat frequency. In Mus musculus (Mouse), this protein is Taste receptor type 2 member 4 (Tas2r4).